The following is a 334-amino-acid chain: Small ribosomal subunit protein uS2 (334 aa).

This sequence belongs to the universal ribosomal protein uS2 family.

The chain is Small ribosomal subunit protein uS2 from Xanthobacter autotrophicus (strain ATCC BAA-1158 / Py2).